The chain runs to 320 residues: L-lactate dehydrogenase (320 aa).

NAD(+) is bound by residues valine 18, aspartate 39, arginine 44, tyrosine 69, and 83–84 (GA). The substrate site is built by glutamine 86 and arginine 92. NAD(+)-binding positions include serine 105, 122–124 (AAN), and serine 147. Substrate is bound at residue 124–127 (NPVD). 152-155 (DSSR) is a substrate binding site. Catalysis depends on histidine 179, which acts as the Proton acceptor. Tyrosine 223 is subject to Phosphotyrosine. Threonine 232 lines the substrate pocket.

The protein belongs to the LDH/MDH superfamily. LDH family. Homotetramer.

It is found in the cytoplasm. The enzyme catalyses (S)-lactate + NAD(+) = pyruvate + NADH + H(+). The protein operates within fermentation; pyruvate fermentation to lactate; (S)-lactate from pyruvate: step 1/1. With respect to regulation, the quaternary structure is constitutionally similar to the active conformation of allosteric LDHs, and the regulation is independent of the fructose 1,6-bisphosphate-binding site. Catalyzes the conversion of lactate to pyruvate. This Lactiplantibacillus pentosus (Lactobacillus pentosus) protein is L-lactate dehydrogenase.